A 289-amino-acid polypeptide reads, in one-letter code: 4-diphosphocytidyl-2-C-methyl-D-erythritol kinase (289 aa).

Residue K11 is part of the active site. 93–103 (PLAAGLAGGSA) serves as a coordination point for ATP. D135 is an active-site residue.

The protein belongs to the GHMP kinase family. IspE subfamily.

It carries out the reaction 4-CDP-2-C-methyl-D-erythritol + ATP = 4-CDP-2-C-methyl-D-erythritol 2-phosphate + ADP + H(+). It participates in isoprenoid biosynthesis; isopentenyl diphosphate biosynthesis via DXP pathway; isopentenyl diphosphate from 1-deoxy-D-xylulose 5-phosphate: step 3/6. Functionally, catalyzes the phosphorylation of the position 2 hydroxy group of 4-diphosphocytidyl-2C-methyl-D-erythritol. In Thermoanaerobacter sp. (strain X514), this protein is 4-diphosphocytidyl-2-C-methyl-D-erythritol kinase.